A 466-amino-acid chain; its full sequence is Myocardial zonula adherens protein (466 aa).

A compositionally biased stretch (polar residues) spans 1–10 (MLRSTSTVTL). The N-terminal stretch at 1-16 (MLRSTSTVTLFSGGGA) is a signal peptide. The disordered stretch occupies residues 1 to 68 (MLRSTSTVTL…SNGESTKRLP (68 aa)). Basic and acidic residues predominate over residues 45-55 (TEKKIERKDQP). Coiled-coil stretches lie at residues 95–137 (NQLK…QDLS) and 187–415 (HIKD…LTET).

Belongs to the MYZAP family. Interacts with DSP, MPRIP and TJP1/ZO1. Interaction with MPRIP inhibits the activation of transcription factor SRF. Interacts with GRIN1. Interacts with DYNLL1. In terms of tissue distribution, detected in heart myocardium and lung.

The protein localises to the cytoplasm. Its subcellular location is the cytoskeleton. The protein resides in the cell membrane. It localises to the myofibril. It is found in the sarcomere. The protein localises to the i band. Its subcellular location is the z line. The protein resides in the cell junction. In terms of biological role, plays a role in cellular signaling via Rho-related GTP-binding proteins and activation of transcription factor SRF. Targets TJP1 to cell junctions. In cortical neurons, may play a role in glutaminergic signal transduction through interaction with the NMDA receptor subunit GRIN1. This chain is Myocardial zonula adherens protein (Myzap), found in Mus musculus (Mouse).